The sequence spans 898 residues: Chitin synthase 1 (898 aa).

The disordered stretch occupies residues 1-154; the sequence is MDPRYGAQPM…PPQQGGGIQR (154 aa). Residues 9 to 21 are compositionally biased toward pro residues; the sequence is PMPPRRSPSPGHP. Polar residues-rich tracts occupy residues 64-75 and 136-146; these read DHLSLNAAQSVD and DVPSEQYQDPP. 5 helical membrane-spanning segments follow: residues 441–461, 540–560, 570–590, 616–636, and 651–671; these read SAFG…YVAL, RWLN…LDFL, FAFF…WFAI, ILGV…FVLS, and MCWF…FISV. An N-linked (GlcNAc...) asparagine glycan is attached at N685. Helical transmembrane passes span 697-717, 726-746, 825-845, and 870-890; these read MLII…LIML, FAQY…YAFC, GVVL…LSSA, and IVLW…MWFL.

This sequence belongs to the chitin synthase family. Class I subfamily.

The protein localises to the cell membrane. It catalyses the reaction [(1-&gt;4)-N-acetyl-beta-D-glucosaminyl](n) + UDP-N-acetyl-alpha-D-glucosamine = [(1-&gt;4)-N-acetyl-beta-D-glucosaminyl](n+1) + UDP + H(+). Polymerizes chitin, a structural polymer of the cell wall and septum, by transferring the sugar moiety of UDP-GlcNAc to the non-reducing end of the growing chitin polymer. Shows additive effects in septum formation with CHS2, CHS3A, CHS4, CHS5, CHS6 and CHS7. Regulates mycelial growth and conidiation. Involved in virulence and mediates mycotoxin deoxinivalenol (DON) biosynthesis via the regulation of the expression of TRI4, TRI5 and TRI6. This Gibberella zeae (strain ATCC MYA-4620 / CBS 123657 / FGSC 9075 / NRRL 31084 / PH-1) (Wheat head blight fungus) protein is Chitin synthase 1.